Consider the following 240-residue polypeptide: Enolase-phosphatase E1 (240 aa).

2 residues coordinate Mg(2+): Asp-9 and Glu-11. Residues 129–130 (SS) and Lys-168 contribute to the substrate site. Asp-195 serves as a coordination point for Mg(2+).

The protein belongs to the HAD-like hydrolase superfamily. MasA/MtnC family. As to quaternary structure, monomer. Mg(2+) serves as cofactor.

The protein resides in the cytoplasm. It localises to the nucleus. It carries out the reaction 5-methylsulfanyl-2,3-dioxopentyl phosphate + H2O = 1,2-dihydroxy-5-(methylsulfanyl)pent-1-en-3-one + phosphate. Its pathway is amino-acid biosynthesis; L-methionine biosynthesis via salvage pathway; L-methionine from S-methyl-5-thio-alpha-D-ribose 1-phosphate: step 3/6. The protein operates within amino-acid biosynthesis; L-methionine biosynthesis via salvage pathway; L-methionine from S-methyl-5-thio-alpha-D-ribose 1-phosphate: step 4/6. Functionally, bifunctional enzyme that catalyzes the enolization of 2,3-diketo-5-methylthiopentyl-1-phosphate (DK-MTP-1-P) into the intermediate 2-hydroxy-3-keto-5-methylthiopentenyl-1-phosphate (HK-MTPenyl-1-P), which is then dephosphorylated to form the acireductone 1,2-dihydroxy-3-keto-5-methylthiopentene (DHK-MTPene). The sequence is that of Enolase-phosphatase E1 from Candida tropicalis (strain ATCC MYA-3404 / T1) (Yeast).